A 103-amino-acid chain; its full sequence is uncharacterized protein (103 aa).

The next 2 membrane-spanning stretches (helical) occupy residues 42–62 (PFPL…VLLA) and 65–85 (TGTL…FICA).

The protein localises to the membrane. This is an uncharacterized protein from Saccharomyces cerevisiae (strain ATCC 204508 / S288c) (Baker's yeast).